Reading from the N-terminus, the 522-residue chain is Target of rapamycin complex 2 subunit MAPKAP1 (522 aa).

Positions 2-184 (GFLDNPTIIL…KKIDVYLPLH (183 aa)) are interaction with MAP3K2. The segment at 2 to 267 (GFLDNPTIIL…GFSTLALVEK (266 aa)) is interaction with NBN. Thr86 is subject to Phosphothreonine. Phosphoserine occurs at positions 128, 186, 315, and 356. Residues 139-267 (QSILSVRLEQ…GFSTLALVEK (129 aa)) enclose the CRIM domain. Positions 279 to 353 (LFVRINAAHG…QSAWEFCLVR (75 aa)) are SIN1-type RBD. Residues 382-487 (HYKSFKVSMI…IVLKVNYILE (106 aa)) enclose the SIN1-type PH domain. Arg393 contributes to the a 1,2-diacyl-sn-glycero-3-phospho-(1D-myo-inositol-3,4,5-trisphosphate) binding site. Thr398 is subject to Phosphothreonine. Residues Lys428 and Lys464 each coordinate a 1,2-diacyl-sn-glycero-3-phospho-(1D-myo-inositol-3,4,5-trisphosphate). The tract at residues 468–522 (FESDAATVNEIVLKVNYILESRASTARADYFAQKQRKLNRRTSFSFQKEKKSGQQ) is interaction with ATF2. Ser510 is subject to Phosphoserine.

The protein belongs to the SIN1 family. As to quaternary structure, component of the mechanistic target of rapamycin complex 2 (mTORC2), consisting in two heterotretramers composed of MTOR, MLST8, RICTOR and MAPKAP1/SIN1. The mTORC2 core complex associates with PRR5/PROTOR1 and/or PRR5L/PROTOR2. Contrary to mTORC1, mTORC2 does not bind to and is not sensitive to FKBP12-rapamycin. Interacts with MAP3K2. Interacts with ATF2. Interacts with MAPK8. Interacts with GTP-bound HRAS and KRAS; inhibiting their activity. Interacts with IFNAR2. Phosphorylation at Ser-128 by PKC promotes relocalization to the perinuclear region, where the mTORC2 complex specifically mediates phosphorylation of SGK1. Phosphorylated at Thr-86 by AKT1 or RPS6KB1 in the presence of growth factors; the effect of this phosphorylation is however unclear. According to two studies, phosphorylation at Thr-86 by AKT1 is part of a positive feedback loop that increases mTORC2 activation. According to another study, phosphorylation at Thr-86 and Thr-398 by RPS6KB1 promotes dissociation from the mTORC2 complex, leading to inhibit mTORC2 signaling. In terms of tissue distribution, present in the lumenal epithelium and glandular epithelium of endometrium (at protein level).

The protein resides in the cell membrane. Its subcellular location is the cytoplasmic vesicle. The protein localises to the endoplasmic reticulum membrane. It is found in the early endosome membrane. It localises to the late endosome membrane. The protein resides in the lysosome membrane. Its subcellular location is the golgi apparatus membrane. The protein localises to the mitochondrion outer membrane. It is found in the cytoplasm. It localises to the perinuclear region. The protein resides in the nucleus. Phosphatidylinositol 3,4,5-trisphosphate (PI(3,4,5)P3) promotes MTOR activation by relieving MAPKAP1/SIN1-mediated inhibition of MTOR that takes place in absence of PI(3,4,5)P3. Functionally, component of the mechanistic target of rapamycin complex 2 (mTORC2), which transduces signals from growth factors to pathways involved in proliferation, cytoskeletal organization, lipogenesis and anabolic output. In response to growth factors, mTORC2 phosphorylates and activates AGC protein kinase family members, including AKT (AKT1, AKT2 and AKT3), PKC (PRKCA, PRKCB and PRKCE) and SGK1. In contrast to mTORC1, mTORC2 is nutrient-insensitive. Within the mTORC2 complex, MAPKAP1/SIN1 acts as a substrate adapter which recognizes and binds AGC protein kinase family members for phosphorylation by MTOR. mTORC2 plays a critical role in AKT1 activation by mediating phosphorylation of different sites depending on the context, such as 'Thr-450', 'Ser-473', 'Ser-477' or 'Thr-479', facilitating the phosphorylation of the activation loop of AKT1 on 'Thr-308' by PDPK1/PDK1 which is a prerequisite for full activation. mTORC2 catalyzes the phosphorylation of SGK1 at 'Ser-422' and of PRKCA on 'Ser-657'. The mTORC2 complex also phosphorylates various proteins involved in insulin signaling, such as FBXW8 and IGF2BP1. mTORC2 acts upstream of Rho GTPases to regulate the actin cytoskeleton, probably by activating one or more Rho-type guanine nucleotide exchange factors. mTORC2 promotes the serum-induced formation of stress-fibers or F-actin. MAPKAP1 inhibits MAP3K2 by preventing its dimerization and autophosphorylation. Inhibits HRAS and KRAS independently of mTORC2 complex. Enhances osmotic stress-induced phosphorylation of ATF2 and ATF2-mediated transcription. Involved in ciliogenesis, regulates cilia length through its interaction with CCDC28B independently of mTORC2 complex. This Ovis aries (Sheep) protein is Target of rapamycin complex 2 subunit MAPKAP1 (MAPKAP1).